A 621-amino-acid chain; its full sequence is Solute carrier family 2, facilitated glucose transporter member 12 (621 aa).

Residues 1–48 (MVPVENTEGPNLLNQKGTAVETEGSYRASGSRHPPWARGCGMFTFLSS) lie on the Cytoplasmic side of the membrane. A helical membrane pass occupies residues 49 to 69 (VTAAVSGLLVGYELGIISGAL). Over 70-84 (LQIKTLLTLSCHEQE) the chain is Extracellular. The helical transmembrane segment at 85 to 105 (MVVSSLLIGALLASLTGGVLI) threads the bilayer. At 106–119 (DRYGRRTAIILSSC) the chain is on the cytoplasmic side. The helical transmembrane segment at 120-140 (LLGLGSLVLILSLSYTVLIVG) threads the bilayer. R141 is a topological domain (extracellular). Residues 142–162 (IAIGVSISLSSIATCVYIAEI) form a helical membrane-spanning segment. Residues 163–176 (APQHRRGLLVSLNE) are Cytoplasmic-facing. Residues 177-197 (LMIVIGILSAYISNYAFANVF) traverse the membrane as a helical segment. The Extracellular portion of the chain corresponds to 198–201 (HGWK). A helical transmembrane segment spans residues 202–222 (YMFGLVIPLGILQAIAMYFLP). Residues 223 to 282 (PSPRFLVMKGQEGAASKVLGRLRALSDATEELTVIKSSLKDEYQYSFWDLFRSKDNMRTR) are Cytoplasmic-facing. A helical transmembrane segment spans residues 283–303 (IMIGLTLVFFVQITGQPNILF). Residues 304–321 (YASTVLKSVGFQSNEAAS) are Extracellular-facing. A helical membrane pass occupies residues 322-342 (LASTGVGVVKVISTIPATLLV). Over 343–349 (DHVGSKT) the chain is Cytoplasmic. The chain crosses the membrane as a helical span at residues 350 to 370 (FLCIGSSVMAASLVTMGIVNL). At 371 to 470 (NIHMNFTNIC…PAFLKWLSLA (100 aa)) the chain is on the extracellular side. N375, N387, N400, and N405 each carry an N-linked (GlcNAc...) asparagine glycan. A helical membrane pass occupies residues 471 to 491 (SLLVYVAAFSIGLGPMPWLVL). The Cytoplasmic portion of the chain corresponds to 492 to 502 (SEIFPGGIRGR). The helical transmembrane segment at 503–523 (AMALTSSMNWGINLLISLTFL) threads the bilayer. The Extracellular segment spans residues 524 to 532 (TVTDLIGLP). A helical transmembrane segment spans residues 533–553 (WVCFIYTIMSLASLLFVVMFI). The Cytoplasmic portion of the chain corresponds to 554–621 (PETKGCSLEQ…GQSRQLSPEN (68 aa)).

Belongs to the major facilitator superfamily. Sugar transporter (TC 2.A.1.1) family. Glucose transporter subfamily.

The protein resides in the cell membrane. Its subcellular location is the endomembrane system. The protein localises to the cytoplasm. It is found in the perinuclear region. It carries out the reaction D-glucose(out) = D-glucose(in). In terms of biological role, insulin-independent facilitative glucose transporter. This is Solute carrier family 2, facilitated glucose transporter member 12 from Macaca fascicularis (Crab-eating macaque).